The chain runs to 429 residues: Glutamate--tRNA ligase 1 (429 aa).

The 'HIGH' region signature appears at 6–16 (PSPTGDMHIGN). A 'KMSKS' region motif is present at residues 235 to 239 (KMSKR). K238 provides a ligand contact to ATP.

Belongs to the class-I aminoacyl-tRNA synthetase family. Glutamate--tRNA ligase type 1 subfamily. Monomer.

The protein resides in the cytoplasm. It carries out the reaction tRNA(Glu) + L-glutamate + ATP = L-glutamyl-tRNA(Glu) + AMP + diphosphate. Its function is as follows. Catalyzes the attachment of glutamate to tRNA(Glu) in a two-step reaction: glutamate is first activated by ATP to form Glu-AMP and then transferred to the acceptor end of tRNA(Glu). This chain is Glutamate--tRNA ligase 1, found in Campylobacter fetus subsp. fetus (strain 82-40).